The following is an 88-amino-acid chain: uncharacterized protein (88 aa).

This is an uncharacterized protein from Sulfolobus islandicus filamentous virus (isolate Iceland/Hveragerdi) (SIFV).